An 82-amino-acid polypeptide reads, in one-letter code: Small ribosomal subunit protein eS21y (82 aa).

Met-1 is modified (N-acetylmethionine).

Belongs to the eukaryotic ribosomal protein eS21 family.

The chain is Small ribosomal subunit protein eS21y (RPS21C) from Arabidopsis thaliana (Mouse-ear cress).